The chain runs to 356 residues: CX3C chemokine receptor 1 (356 aa).

The Extracellular portion of the chain corresponds to 1–26 (MTTLYSDWATESFEYDESSEACFIGD). Residues 27 to 47 (IVAFGTIFLSIFYSLVFAFGL) traverse the membrane as a helical segment. Residues 48-68 (VGNLLVVCALTSSRKPKSITD) lie on the Cytoplasmic side of the membrane. Residues 69 to 89 (IYLLNLALSDLLFVATLPFWT) traverse the membrane as a helical segment. The Extracellular segment spans residues 90-105 (HYVISEQGFHNAVCKL). The cysteines at positions 103 and 176 are disulfide-linked. Residues 106-126 (TTALFFIGFFGGIFFITVISI) traverse the membrane as a helical segment. The Cytoplasmic segment spans residues 127–147 (DRYMAIVLAANSINNRTVQHG). The helical transmembrane segment at 148-168 (VTTSLGVWAAAILVAAPQFMF) threads the bilayer. The Extracellular portion of the chain corresponds to 169–195 (TKQKGNECLGDYPEVLQDIWPVLRNTE). A helical membrane pass occupies residues 196-216 (ANFLGFLLPVLIMSYCYFRII). The Cytoplasmic portion of the chain corresponds to 217-232 (QTLFSCKNHKKAKAIK). The helical transmembrane segment at 233–253 (LILLVVIVFFLFWTPYNVMIF) threads the bilayer. The Extracellular segment spans residues 254 to 277 (LETLKLYGFFPNCDMKRDLRLALS). A helical transmembrane segment spans residues 278 to 298 (VTETVAFSHCCLNPLIYAFAG). Topologically, residues 299–356 (QKFRRYLRHLSRKCQAVLCGRPVHVSFSPSESQRSRQESIVSSNFTHYTSDGDASLLL) are cytoplasmic. Threonine 347 carries the phosphothreonine modification.

This sequence belongs to the G-protein coupled receptor 1 family. In terms of assembly, found in a ternary complex with CX3CL1 and ITGAV:ITGB3 or ITGA4:ITGB1. This protein is not N-glycosylated which is unusual for G-protein-coupled receptors.

It localises to the cell membrane. Functionally, receptor for the C-X3-C chemokine fractalkine (CX3CL1) present on many early leukocyte cells; CX3CR1-CX3CL1 signaling exerts distinct functions in different tissue compartments, such as immune response, inflammation, cell adhesion and chemotaxis. CX3CR1-CX3CL1 signaling mediates cell migratory functions. Responsible for the recruitment of natural killer (NK) cells to inflamed tissues. Acts as a regulator of inflammation process leading to atherogenesis by mediating macrophage and monocyte recruitment to inflamed atherosclerotic plaques, promoting cell survival. Involved in airway inflammation by promoting interleukin 2-producing T helper (Th2) cell survival in inflamed lung. Involved in the migration of circulating monocytes to non-inflamed tissues, where they differentiate into macrophages and dendritic cells. Acts as a negative regulator of angiogenesis, probably by promoting macrophage chemotaxis. Plays a key role in brain microglia by regulating inflammatory response in the central nervous system (CNS) and regulating synapse maturation. Required to restrain the microglial inflammatory response in the CNS and the resulting parenchymal damage in response to pathological stimuli. Involved in brain development by participating in synaptic pruning, a natural process during which brain microglia eliminates extra synapses during postnatal development. Synaptic pruning by microglia is required to promote the maturation of circuit connectivity during brain development. Acts as an important regulator of the gut microbiota by controlling immunity to intestinal bacteria and fungi. Expressed in lamina propria dendritic cells in the small intestine, which form transepithelial dendrites capable of taking up bacteria in order to provide defense against pathogenic bacteria. Required to initiate innate and adaptive immune responses against dissemination of commensal fungi (mycobiota) component of the gut: expressed in mononuclear phagocytes (MNPs) and acts by promoting induction of antifungal IgG antibodies response to confer protection against disseminated C.albicans or C.auris infection. Also acts as a receptor for C-C motif chemokine CCL26, inducing cell chemotaxis. The polypeptide is CX3C chemokine receptor 1 (Oryctolagus cuniculus (Rabbit)).